Here is a 100-residue protein sequence, read N- to C-terminus: High mobility group protein C (100 aa).

The segment at residues 12–80 (PKRPLSAFFL…KYEKDMQAYE (69 aa)) is a DNA-binding region (HMG box). Residues 81–100 (KKYGKPEKQKKIKKNKKGSK) form a disordered region. Residues 90–100 (KKIKKNKKGSK) show a composition bias toward basic residues.

The protein resides in the nucleus. It is found in the chromosome. The polypeptide is High mobility group protein C (Tetrahymena thermophila).